Here is a 359-residue protein sequence, read N- to C-terminus: tRNA N6-adenosine threonylcarbamoyltransferase (359 aa).

Residues His-115 and His-119 each coordinate Fe cation. Residues 137–141, Asp-170, Gly-183, and Asn-283 contribute to the substrate site; that span reads LVSGG. Asp-311 is a binding site for Fe cation. The tract at residues 328-359 is disordered; the sequence is APDSLDIAPRSRWPLDEKSAPVFGTGRRGAKA.

The protein belongs to the KAE1 / TsaD family. It depends on Fe(2+) as a cofactor.

Its subcellular location is the cytoplasm. The catalysed reaction is L-threonylcarbamoyladenylate + adenosine(37) in tRNA = N(6)-L-threonylcarbamoyladenosine(37) in tRNA + AMP + H(+). In terms of biological role, required for the formation of a threonylcarbamoyl group on adenosine at position 37 (t(6)A37) in tRNAs that read codons beginning with adenine. Is involved in the transfer of the threonylcarbamoyl moiety of threonylcarbamoyl-AMP (TC-AMP) to the N6 group of A37, together with TsaE and TsaB. TsaD likely plays a direct catalytic role in this reaction. This Brucella abortus (strain S19) protein is tRNA N6-adenosine threonylcarbamoyltransferase.